Here is a 133-residue protein sequence, read N- to C-terminus: Large ribosomal subunit protein uL15 (133 aa).

Residues Met1–Leu57 are disordered. Gly residues predominate over residues Arg21–Asn35.

Belongs to the universal ribosomal protein uL15 family. As to quaternary structure, part of the 50S ribosomal subunit.

Its function is as follows. Binds to the 23S rRNA. In Campylobacter concisus (strain 13826), this protein is Large ribosomal subunit protein uL15.